The sequence spans 130 residues: Small ribosomal subunit protein uS8 (130 aa).

It belongs to the universal ribosomal protein uS8 family. In terms of assembly, part of the 30S ribosomal subunit. Contacts proteins S5 and S12.

One of the primary rRNA binding proteins, it binds directly to 16S rRNA central domain where it helps coordinate assembly of the platform of the 30S subunit. The sequence is that of Small ribosomal subunit protein uS8 from Buchnera aphidicola subsp. Baizongia pistaciae (strain Bp).